Here is a 529-residue protein sequence, read N- to C-terminus: Delayed-rectifier potassium channel regulatory subunit KCNS1 (529 aa).

The Cytoplasmic segment spans residues 1 to 217 (MLMLLVRGTH…LTMENPGYSL (217 aa)). Residues 218–239 (PSKLFSCVSISVVLASIAAMCI) form a helical membrane-spanning segment. Residues 240–270 (HSLPEYQAREAAAAVAAVAAGRSPEGVRDDP) lie on the Extracellular side of the membrane. Residues 271 to 293 (VLRRLEYFCIAWFSFEVSSRLLL) traverse the membrane as a helical segment. Residues 294–304 (APSTRNFFCHP) lie on the Cytoplasmic side of the membrane. A helical transmembrane segment spans residues 305 to 322 (LNLIDIVSVLPFYLTLLA). The Extracellular portion of the chain corresponds to 323–340 (GVALGDQGGTGGKELGHL). The helical; Voltage-sensor transmembrane segment at 341–361 (GKVVQVFRLMRIFRVLKLARH) threads the bilayer. Topologically, residues 362 to 376 (STGLRSLGATLKHSY) are cytoplasmic. Residues 377-398 (REVGILLLYLAVGVSVFSGVAY) traverse the membrane as a helical segment. Residues 399-411 (TAEKEEDVGFNTI) lie on the Extracellular side of the membrane. Residues 412–423 (PACWWWGTVSMT) constitute an intramembrane region (helical). A Selectivity filter motif is present at residues 424-429 (TVGYGD). An intramembrane segment occupies 424 to 431 (TVGYGDVV). Topologically, residues 432-438 (PVTVAGK) are extracellular. A helical transmembrane segment spans residues 439–467 (LAASGCILGGILVVALPITIIFNKFSHFY). Residues 468 to 529 (RRQKALEAAV…PSEPPHPQMY (62 aa)) are Cytoplasmic-facing. The segment at 494 to 529 (GVSEASLETSRETSQEGRSADLETQAPSEPPHPQMY) is disordered. Positions 502 to 514 (TSRETSQEGRSAD) are enriched in basic and acidic residues.

It belongs to the potassium channel family. S (TC 1.A.1.2) subfamily. Kv9.1/KCNS1 sub-subfamily. Heterotetramer with KCNB1. Heterotetramer with KCNB2. Does not form homomultimers.

It localises to the cell membrane. Its function is as follows. Potassium channel regulatory subunit that modulate the delayed rectifier voltage-gated potassium channel activity of KCNB1 and KCNB2 by altering their kinetics, expression levels, and shifting the half-inactivation potential to more polarized values. While it does not form functional channels on its own, it can form functional heterotetrameric channels with KCNB1 and KCNB2. Each regulatory subunit has unique regulatory properties that can lead to extensive inhibition, significant changes in kinetics, and/or substantial shifts in the voltage dependencies of the inactivation process. This is Delayed-rectifier potassium channel regulatory subunit KCNS1 from Macaca mulatta (Rhesus macaque).